Consider the following 101-residue polypeptide: YcgL domain-containing protein ABBFA_001807 (101 aa).

Residues 1-92 (MHCDIYRSSK…PPEGLINPNA (92 aa)) enclose the YcgL domain.

The chain is YcgL domain-containing protein ABBFA_001807 from Acinetobacter baumannii (strain AB307-0294).